We begin with the raw amino-acid sequence, 388 residues long: Transcription factor SOX-7 (388 aa).

Disordered regions lie at residues 20-46 and 140-197; these read DAEL…SRIR and RDQN…VDTY. Basic and acidic residues-rich tracts occupy residues 36–45 and 146–164; these read PGDKGSESRI and PEKR…DRGE. Positions 45-113 form a DNA-binding region, HMG box; the sequence is IRRPMNAFMV…QHMQDYPNYK (69 aa). One can recognise a Sox C-terminal domain in the interval 268-388; the sequence is VSMMSPVPGC…ATYYNSYSVS (121 aa).

Interacts with CTNNB1/beta-catenin; this interaction may lead to the proteasomal degradation of active CTNNB1 and thus inhibition of Wnt/beta-catenin-stimulated transcription. As to expression, widely expressed in adult and fetal tissues. Present both in mesenchymal and epithelial cells in some adult tissues, including colon. Tends to be down-regulated in prostate adenocarcinomas and colorectal tumors due to promoter hypermethylation.

The protein resides in the nucleus. Its subcellular location is the cytoplasm. Binds to and activates the CDH5 promoter, hence plays a role in the transcriptional regulation of genes expressed in the hemogenic endothelium and blocks further differentiation into blood precursors. May be required for the survival of both hematopoietic and endothelial precursors during specification. Competes with GATA4 for binding and activation of the FGF3 promoter. Represses Wnt/beta-catenin-stimulated transcription, probably by targeting CTNNB1 to proteasomal degradation. Binds the DNA sequence 5'-AACAAT-3'. This chain is Transcription factor SOX-7 (SOX7), found in Homo sapiens (Human).